We begin with the raw amino-acid sequence, 228 residues long: Histidine/lysine/arginine/ornithine transport system permease protein HisQ (228 aa).

The Periplasmic segment spans residues 1–12 (MLYGFSGVILQG). The helical transmembrane segment at 13–33 (ALVTLELAISSVVLAVIIGLI) threads the bilayer. Positions 13 to 212 (ALVTLELAIS…VFTTVSNGVL (200 aa)) constitute an ABC transmembrane type-1 domain. Residues 34–58 (GAGGKLSQNRLSGLIFEGYTTLIRG) lie on the Cytoplasmic side of the membrane. The helical transmembrane segment at 59–79 (VPDLVLMLLIFYGLQIALNTV) threads the bilayer. Topologically, residues 80–87 (TEAMGVGQ) are periplasmic. Residues 88–108 (IDIDPMVAGIITLGFIYGAYF) form a helical membrane-spanning segment. The Cytoplasmic portion of the chain corresponds to 109-148 (TETFRGAFMAVPKGHIEAATAFGFTRGQVFRRIMFPSMMR). Residues 149–171 (YALPGIGNNWQVILKSTALVSLL) traverse the membrane as a helical segment. Residues 172-194 (GLEDVVKATQLAGKSTWEPFYFA) are Periplasmic-facing. Residues 195-215 (IVCGVIYLVFTTVSNGVLLFL) form a helical membrane-spanning segment. At 216-228 (ERRYSVGVKRADL) the chain is on the cytoplasmic side.

Belongs to the binding-protein-dependent transport system permease family. HisMQ subfamily. As to quaternary structure, the HisPMQJ complex is composed of two ATP-binding proteins (HisP), two transmembrane proteins (HisM and HisQ) and a solute-binding protein (HisJ). The HisPMQ-ArgT complex is composed of two ATP-binding proteins (HisP), two transmembrane proteins (HisM and HisQ) and a solute-binding protein (ArgT).

The protein localises to the cell inner membrane. Functionally, part of the ABC transporter complex HisPMQJ involved in histidine transport. Is also part of the ABC transporter complex HisPMQ-ArgT involved in lysine/arginine/ornithine transport. Probably responsible for the translocation of the substrate across the membrane. This Escherichia coli (strain K12) protein is Histidine/lysine/arginine/ornithine transport system permease protein HisQ (hisQ).